Reading from the N-terminus, the 239-residue chain is MPQVLMGNTRLHAPLEDGIPLIENDENSSQNEVDLYDYVSMSSYGGDNDFLISSAGGNITPENRPSFSAHVVLFAISALVIKPVCCFIFLNHYVITGSYDFAVAGGVCTVLYYMRLALTAWFMFRNIQSDMLPLNVWQQFVIGCMALGRTVAFMVVSYTTLFIRSELFFSMLAPNAGREYITPIIAHKLMPLISVRSAVCLVIISTAVYAADAICDTIGFTLPRMWMCILMRSSSVKRS.

3 helical membrane-spanning segments follow: residues 65–81 (PSFS…ALVI), 140–156 (FVIG…FMVV), and 189–208 (LMPL…STAV).

Belongs to the alphaherpesvirinae UL20 family. In terms of assembly, interacts with gK (via N-terminus); this interaction plays a role in the coordinate transport of UL20 and gK to the trans-Golgi network (TGN), and is required for their cell surface expression. Interacts with gB.

It is found in the virion. Its subcellular location is the host cell membrane. The protein localises to the host endosome membrane. The protein resides in the host Golgi apparatus membrane. It localises to the host nucleus membrane. Plays an essential role in egress of virus particles from the nucleus, cytoplasmic envelopment and virus-induced cell fusion. Forms a functional protein complex with gK and this interaction is absolutely essential for their coordinate intracellular transport, gK glycosylation, expression on host cell surface, and function. Together, they modulate gB-mediated virus-induced cell fusion and virion egress and therefore actively participate in these processes. The polypeptide is Protein UL20 homolog (Equus caballus (Horse)).